Here is a 357-residue protein sequence, read N- to C-terminus: Thiamine thiazole synthase, chloroplastic (357 aa).

Substrate-binding positions include Ala-102, 123–124 (EQ), Gly-131, and Val-196. Cys-233 carries the 2,3-didehydroalanine (Cys) modification. Substrate contacts are provided by residues Asp-235, His-250, Met-304, and 314–316 (RMG).

This sequence belongs to the THI4 family. Homooctamer. It depends on Fe cation as a cofactor. In terms of processing, during the catalytic reaction, a sulfide is transferred from Cys-233 to a reaction intermediate, generating a dehydroalanine residue.

The protein localises to the plastid. Its subcellular location is the chloroplast. It catalyses the reaction [ADP-thiazole synthase]-L-cysteine + glycine + NAD(+) = [ADP-thiazole synthase]-dehydroalanine + ADP-5-ethyl-4-methylthiazole-2-carboxylate + nicotinamide + 3 H2O + 2 H(+). Functionally, involved in biosynthesis of the thiamine precursor thiazole. Catalyzes the conversion of NAD and glycine to adenosine diphosphate 5-(2-hydroxyethyl)-4-methylthiazole-2-carboxylic acid (ADT), an adenylated thiazole intermediate. The reaction includes an iron-dependent sulfide transfer from a conserved cysteine residue of the protein to a thiazole intermediate. The enzyme can only undergo a single turnover, which suggests it is a suicide enzyme. May have additional roles in adaptation to various stress conditions and in DNA damage tolerance. This is Thiamine thiazole synthase, chloroplastic from Chlamydomonas reinhardtii (Chlamydomonas smithii).